Here is a 1190-residue protein sequence, read N- to C-terminus: Phosphatidylinositol-3,5-bisphosphate 3-phosphatase MTMR4 (1190 aa).

S8 carries the phosphoserine modification. Positions 153-570 (EHIRCRQEAE…RALHLWTAVY (418 aa)) constitute a Myotubularin phosphatase domain. The a 1,2-diacyl-sn-glycero-3-phospho-(1D-myo-inositol-3,5-bisphosphate) site is built by N320, N345, and I346. Residues N320, N345, and I346 each coordinate a 1,2-diacyl-sn-glycero-3-phospho-(1D-myo-inositol-3-phosphate). Catalysis depends on C407, which acts as the Phosphocysteine intermediate. Residues S408, D409, G410, W411, D412, R413, K449, and R453 each contribute to the a 1,2-diacyl-sn-glycero-3-phospho-(1D-myo-inositol-3,5-bisphosphate) site. S408, D409, G410, W411, D412, and R413 together coordinate a 1,2-diacyl-sn-glycero-3-phospho-(1D-myo-inositol-3-phosphate). A 1,2-diacyl-sn-glycero-3-phospho-(1D-myo-inositol-3-phosphate) is bound at residue R453. S610 and S629 each carry phosphoserine. 3 disordered regions span residues 616 to 694 (SACD…FKGH), 724 to 749 (ETEA…GKPP), and 773 to 848 (DFPE…PSSV). A compositionally biased stretch (polar residues) spans 618–637 (CDTSSPLTRTSSDPNLNNHS). Polar residues predominate over residues 782–847 (LTGTPQQPHL…SISHQEQPSS (66 aa)). Positions 999-1003 (VPPLY) match the PY-motif; substrate motif for NEDD4 motif. A coiled-coil region spans residues 1020–1052 (LRQIEAGYRQEVEQLRRQVRELQMRLDIRHCCA). The FYVE-type zinc finger occupies 1109–1169 (DHMASHCFNC…VCNSCYEHIQ (61 aa)). Zn(2+) is bound by residues C1115, C1118, C1131, C1134, C1139, C1142, C1161, and C1164.

The protein belongs to the protein-tyrosine phosphatase family. Non-receptor class myotubularin subfamily. As to quaternary structure, homooligomeric. Forms MTMR3:MTMR4 heterooligomers; regulates the localization of both proteins. The MTMR3:MTMR4 heterooligomer can also recruit both CEP55 and PLK1; occurs during early mitosis, regulates the phosphorylation of CEP55 by PLK1 and its recruitment to the midbody where it can mediate cell abscission. Interacts with SMAD2 and SMAD3; negatively regulates TGF-beta signaling through SMAD2 and SMAD3 dephosphorylation and retention in endosomes. Interacts with SMAD1; negatively regulates BMP signaling through SMAD1 dephosphorylation and retention in endosomes. In terms of processing, ubiquitinated. Ubiquitination by NEDD4 probably leads to proteasomal degradation. Phosphorylated by CDK1 during mitosis.

It is found in the early endosome membrane. It localises to the recycling endosome membrane. The protein localises to the late endosome membrane. The protein resides in the cytoplasmic vesicle. Its subcellular location is the phagosome membrane. It carries out the reaction a 1,2-diacyl-sn-glycero-3-phospho-(1D-myo-inositol-3-phosphate) + H2O = a 1,2-diacyl-sn-glycero-3-phospho-(1D-myo-inositol) + phosphate. It catalyses the reaction a 1,2-diacyl-sn-glycero-3-phospho-(1D-myo-inositol-3,5-bisphosphate) + H2O = a 1,2-diacyl-sn-glycero-3-phospho-(1D-myo-inositol-5-phosphate) + phosphate. The catalysed reaction is 1,2-dioctanoyl-sn-glycero-3-phospho-(1-D-myo-inositol-3-phosphate) + H2O = 1,2-dioctanoyl-sn-glycero-3-phospho-(1D-myo-inositol) + phosphate. The enzyme catalyses 1,2-dioctanoyl-sn-glycero-3-phospho-(1D-myo-inositol-3,5-bisphosphate) + H2O = 1,2-dioctanoyl-sn-glycero-3-phospho-(1D-myo-inositol-5-phosphate) + phosphate. Functionally, lipid phosphatase that specifically dephosphorylates the D-3 position of phosphatidylinositol 3-phosphate and phosphatidylinositol 3,5-bisphosphate, generating phosphatidylinositol and phosphatidylinositol 5-phosphate. Decreases the levels of phosphatidylinositol 3-phosphate, a phospholipid found in cell membranes where it acts as key regulator of both cell signaling and intracellular membrane traffic, in a subset of endosomal membranes to negatively regulate both endocytic recycling and trafficking and/or maturation of endosomes toward lysosomes. Through phosphatidylinositol 3-phosphate turnover in phagosome membranes regulates phagocytosis and phagosome maturation. By decreasing phosphatidylinositol 3-monophosphate (PI3P) levels in immune cells it can also regulate the innate immune response. Beside its lipid phosphatase activity, can also function as a molecular adapter to regulate midbody abscission during mitotic cytokinesis. Can also negatively regulate TGF-beta and BMP signaling through Smad proteins dephosphorylation and retention in endosomes. The protein is Phosphatidylinositol-3,5-bisphosphate 3-phosphatase MTMR4 of Mus musculus (Mouse).